The chain runs to 394 residues: MVVFSKVTAAVFGLATIASAAPAPPTRKGFTVQQQARPAQKKQVNLPAMYAHALTKFGGSVPESVKVAASKGSAVTTPEAGDVEYLTPVNVGGTVMNLDFDTGSADLWVFSGELPASETSGHSVYKPGRTASKLPGGSWQISYGDGSSASGDVYKDTVVVGGVTAHGQAVEAAAQISSQFLQDKNNDGLLGLAFSSLNTVQPQPQTTFFDTVKSSLDRPLFAVTLKHNAPGSFDFGYIDHSKYTGEIAYTDVDNSQGFWSFTADGYSIGGGQSSGSSISGIADTGTTLLLLDDNVVSDFYQHVEGAQNSDEYGGYVFPCSAKVPSFTTIIGGYKAVTPGKLINYGPVTDGSSTCYGGIQSSGGVGQNIFGDIFLKSQFVVFDSEGPRLGFAAQA.

Residues 1 to 20 (MVVFSKVTAAVFGLATIASA) form the signal peptide. Residues 21 to 69 (APAPPTRKGFTVQQQARPAQKKQVNLPAMYAHALTKFGGSVPESVKVAA) constitute a propeptide, activation peptide. Residues 85-391 (YLTPVNVGGT…DSEGPRLGFA (307 aa)) enclose the Peptidase A1 domain. Active-site residues include Asp-101 and Asp-283. Cys-319 and Cys-354 are oxidised to a cystine.

The protein belongs to the peptidase A1 family. In terms of assembly, monomer.

The protein resides in the secreted. The catalysed reaction is Hydrolysis of proteins with broad specificity. Generally favors hydrophobic residues in P1 and P1', but also accepts Lys in P1, which leads to activation of trypsinogen. Does not clot milk.. Its function is as follows. Secreted aspartic endopeptidase that allows assimilation of proteinaceous substrates. The scissile peptide bond is attacked by a nucleophilic water molecule activated by two aspartic residues in the active site. Shows a broad primary substrate specificity. Favors hydrophobic residues at the P1 and P1' positions, but also accepts a lysine residue in the P1 position, leading to the activation of trypsinogen and chymotrypsinogen A. This is Aspergillopepsin-1 (pepA) from Aspergillus clavatus (strain ATCC 1007 / CBS 513.65 / DSM 816 / NCTC 3887 / NRRL 1 / QM 1276 / 107).